A 216-amino-acid chain; its full sequence is V-type ATP synthase subunit D (216 aa).

This sequence belongs to the V-ATPase D subunit family.

Produces ATP from ADP in the presence of a proton gradient across the membrane. In Clostridium botulinum (strain Loch Maree / Type A3), this protein is V-type ATP synthase subunit D.